The following is a 573-amino-acid chain: 2-succinyl-5-enolpyruvyl-6-hydroxy-3-cyclohexene-1-carboxylate synthase (573 aa).

The protein belongs to the TPP enzyme family. MenD subfamily. As to quaternary structure, homodimer. The cofactor is Mg(2+). It depends on Mn(2+) as a cofactor. Thiamine diphosphate is required as a cofactor.

It catalyses the reaction isochorismate + 2-oxoglutarate + H(+) = 5-enolpyruvoyl-6-hydroxy-2-succinyl-cyclohex-3-ene-1-carboxylate + CO2. Its pathway is quinol/quinone metabolism; 1,4-dihydroxy-2-naphthoate biosynthesis; 1,4-dihydroxy-2-naphthoate from chorismate: step 2/7. It participates in quinol/quinone metabolism; menaquinone biosynthesis. Functionally, catalyzes the thiamine diphosphate-dependent decarboxylation of 2-oxoglutarate and the subsequent addition of the resulting succinic semialdehyde-thiamine pyrophosphate anion to isochorismate to yield 2-succinyl-5-enolpyruvyl-6-hydroxy-3-cyclohexene-1-carboxylate (SEPHCHC). The chain is 2-succinyl-5-enolpyruvyl-6-hydroxy-3-cyclohexene-1-carboxylate synthase from Shewanella putrefaciens (strain CN-32 / ATCC BAA-453).